The primary structure comprises 107 residues: Iron-binding protein IscA (107 aa).

Fe cation-binding residues include cysteine 35, cysteine 99, and cysteine 101.

This sequence belongs to the HesB/IscA family. Homodimer; may form tetramers and higher multimers. Requires Fe cation as cofactor.

Is able to transfer iron-sulfur clusters to apo-ferredoxin. Multiple cycles of [2Fe2S] cluster formation and transfer are observed, suggesting that IscA acts catalytically. Recruits intracellular free iron so as to provide iron for the assembly of transient iron-sulfur cluster in IscU in the presence of IscS, L-cysteine and the thioredoxin reductase system TrxA/TrxB. This is Iron-binding protein IscA from Salmonella agona (strain SL483).